Here is a 239-residue protein sequence, read N- to C-terminus: tRNA (guanine-N(7)-)-methyltransferase (239 aa).

S-adenosyl-L-methionine contacts are provided by E69, E94, D121, and D144. Residue D144 is part of the active site. K148 contacts substrate. The segment at 150–155 (RHNKRR) is interaction with RNA. Residues D180 and 217–220 (TKFE) each bind substrate.

The protein belongs to the class I-like SAM-binding methyltransferase superfamily. TrmB family. In terms of assembly, monomer.

The catalysed reaction is guanosine(46) in tRNA + S-adenosyl-L-methionine = N(7)-methylguanosine(46) in tRNA + S-adenosyl-L-homocysteine. The protein operates within tRNA modification; N(7)-methylguanine-tRNA biosynthesis. In terms of biological role, catalyzes the formation of N(7)-methylguanine at position 46 (m7G46) in tRNA. The sequence is that of tRNA (guanine-N(7)-)-methyltransferase from Yersinia pseudotuberculosis serotype I (strain IP32953).